A 235-amino-acid polypeptide reads, in one-letter code: Putative cobalt transport protein CbiM 2 (235 aa).

7 helical membrane passes run 9 to 29, 41 to 61, 80 to 100, 107 to 127, 135 to 155, 160 to 180, and 181 to 201; these read PAGW…MGII, YLPL…LKLP, FGYC…ALLL, TMGA…YAVY, INIY…TYII, LALA…AFFS, and IFAI…ALVF.

Belongs to the CbiM family. Forms an energy-coupling factor (ECF) transporter complex composed of an ATP-binding protein (A component, CbiO), a transmembrane protein (T component, CbiQ) and 2 possible substrate-capture proteins (S components, CbiM and CbiN) of unknown stoichimetry.

Its subcellular location is the cell membrane. Its pathway is cofactor biosynthesis; adenosylcobalamin biosynthesis. Part of the energy-coupling factor (ECF) transporter complex CbiMNOQ involved in cobalt import. This is Putative cobalt transport protein CbiM 2 from Methanosphaerula palustris (strain ATCC BAA-1556 / DSM 19958 / E1-9c).